The chain runs to 493 residues: Protein LTV1 homolog (493 aa).

3 disordered regions span residues 42 to 63, 97 to 119, and 170 to 207; these read AAARQQKPKDPEPPTDPAQRQE, PNQARKQKVQDSEKPGPAPKLML, and IQAMAEGDSDDEEWDDEDGEEQSDMDFDSDDLNEDENE. Positions 176–207 are enriched in acidic residues; that stretch reads GDSDDEEWDDEDGEEQSDMDFDSDDLNEDENE. Phosphoserine occurs at positions 345, 369, 370, 424, and 427. The segment at 359–387 is disordered; sequence VIDEPRRSRRSSASTNPAPIQIDPKTGLP. Residues 437-468 are a coiled coil; sequence KDETHEEKKERKRLLKDYRNERRIEKKANTEA. The span at 465–474 shows a compositional bias: basic and acidic residues; that stretch reads NTEAFKEEKK. Positions 465–493 are disordered; it reads NTEAFKEEKKRQTHVKINQRTNQQGASIV. Polar residues predominate over residues 479–493; the sequence is VKINQRTNQQGASIV.

The protein belongs to the LTV1 family. Interacts with RpS3; the interaction is RNA-independent. Associates with free 40S ribosome subunits.

It is found in the cytoplasm. Necessary for the biogenesis of 40S ribosome subunits by regulating pre-rRNA processing. Non-ribosomal factor required for efficient nuclear export of the ribosomal 40S subunit. Necessary for endoreplication driven by Myc. This is Protein LTV1 homolog from Drosophila melanogaster (Fruit fly).